Here is a 304-residue protein sequence, read N- to C-terminus: MATH domain and coiled-coil domain-containing protein At2g42470 (304 aa).

Residues 6 to 123 (QTSFTFEIDN…NNKLIIEVQV (118 aa)) form the MATH domain. Residues 219–292 (FKVDWLKKKL…LKIELDRTRR (74 aa)) are a coiled coil.

The polypeptide is MATH domain and coiled-coil domain-containing protein At2g42470 (Arabidopsis thaliana (Mouse-ear cress)).